The primary structure comprises 208 residues: Translation initiation factor 6 (208 aa).

The protein belongs to the eIF-6 family.

Its function is as follows. Binds to the 50S ribosomal subunit and prevents its association with the 30S ribosomal subunit to form the 70S initiation complex. The protein is Translation initiation factor 6 (eif6) of Nanoarchaeum equitans (strain Kin4-M).